The sequence spans 849 residues: SMY2 homolog 2 (849 aa).

Positions 149–205 (ESQWKYIDSNGNIQGPFGTNNMSQWYQGGYFTPTLQICRLATSPEPFGVNDRFIRLG) constitute a GYF domain. Disordered stretches follow at residues 305 to 505 (APLS…TTNL), 527 to 547 (DLKK…QLDR), 593 to 612 (TKIN…IKPD), and 634 to 661 (NRAS…NTSN). A compositionally biased stretch (low complexity) spans 308–318 (STTSSRSNKTT). The span at 319–331 (SSHEEKVPSHEEA) shows a compositional bias: basic and acidic residues. The residue at position 350 (threonine 350) is a Phosphothreonine. Composition is skewed to basic and acidic residues over residues 361-375 (TKQE…KEQN), 387-403 (VDRK…KSKD), and 425-443 (LLEE…EEQR). Residues 410 to 484 (EEQKRFAKAE…EKQKELLNNI (75 aa)) are a coiled coil. A compositionally biased stretch (basic residues) spans 444 to 455 (KLKKEKKLKQKQ). The segment covering 456 to 479 (KKEEEKLKKKKKEEGKLEKEKQKE) has biased composition (basic and acidic residues). The segment covering 483 to 505 (NILTGDTETPSSENTATSITTNL) has biased composition (polar residues). Positions 594 to 605 (KINSQSKINKAN) are enriched in polar residues. The segment covering 644-661 (SRTPSPSSSALNSSNTSN) has biased composition (low complexity).

It belongs to the SMY2/mpd2 family. Interacts with ribosomes. Interacts with EAP1 and MSL5 (via the GYP domain).

It is found in the cytoplasm. The protein is SMY2 homolog 2 (SYH1) of Saccharomyces cerevisiae (strain ATCC 204508 / S288c) (Baker's yeast).